The following is a 324-amino-acid chain: Anthranilate phosphoribosyltransferase (324 aa).

Residues Gly-75, 78 to 79 (GD), Thr-83, 85 to 88 (NVST), 102 to 110 (KHGNFGITG), and Ser-114 each bind 5-phospho-alpha-D-ribose 1-diphosphate. Residue Gly-75 coordinates anthranilate. A Mg(2+)-binding site is contributed by Ser-87. Asn-105 contributes to the anthranilate binding site. Arg-160 provides a ligand contact to anthranilate. Residues Asp-216 and Glu-217 each coordinate Mg(2+).

Belongs to the anthranilate phosphoribosyltransferase family. In terms of assembly, homodimer. It depends on Mg(2+) as a cofactor.

The catalysed reaction is N-(5-phospho-beta-D-ribosyl)anthranilate + diphosphate = 5-phospho-alpha-D-ribose 1-diphosphate + anthranilate. The protein operates within amino-acid biosynthesis; L-tryptophan biosynthesis; L-tryptophan from chorismate: step 2/5. Catalyzes the transfer of the phosphoribosyl group of 5-phosphorylribose-1-pyrophosphate (PRPP) to anthranilate to yield N-(5'-phosphoribosyl)-anthranilate (PRA). The polypeptide is Anthranilate phosphoribosyltransferase (Picrophilus torridus (strain ATCC 700027 / DSM 9790 / JCM 10055 / NBRC 100828 / KAW 2/3)).